Consider the following 295-residue polypeptide: Regucalcin (295 aa).

E18 contributes to the a divalent metal cation binding site. 3 residues coordinate substrate: R100, N102, and D120. 2 residues coordinate a divalent metal cation: N150 and D200. The active-site Proton donor/acceptor is the D200.

Belongs to the SMP-30/CGR1 family. It depends on Zn(2+) as a cofactor. The cofactor is Mn(2+). Requires Ca(2+) as cofactor. Mg(2+) is required as a cofactor.

The protein resides in the cytoplasm. The enzyme catalyses D-glucono-1,5-lactone + H2O = D-gluconate + H(+). It functions in the pathway cofactor biosynthesis; L-ascorbate biosynthesis via UDP-alpha-D-glucuronate pathway; L-ascorbate from UDP-alpha-D-glucuronate: step 3/4. Functionally, gluconolactonase with low activity towards other sugar lactones, including gulonolactone and galactonolactone. Catalyzes a key step in ascorbic acid (vitamin C) biosynthesis. Can also hydrolyze diisopropyl phosphorofluoridate and phenylacetate (in vitro). Calcium-binding protein. Modulates Ca(2+) signaling, and Ca(2+)-dependent cellular processes and enzyme activities. In Danio rerio (Zebrafish), this protein is Regucalcin.